We begin with the raw amino-acid sequence, 757 residues long: Probable phospholipase C20G8.02, mitochondrial (757 aa).

A mitochondrion-targeting transit peptide spans 1-13 (MILYIVLPFYVRT). Positions 289–330 (ESNSKPSTPVPTEELTSTTLLNDSSDPSDNFTPSNTESTIDL) are disordered. A compositionally biased stretch (polar residues) spans 302 to 329 (ELTSTTLLNDSSDPSDNFTPSNTESTID). Residue serine 524 is part of the active site. Residues 547 to 757 (LDFPVANFFA…LAHFILTQLL (211 aa)) enclose the DDHD domain.

It belongs to the PA-PLA1 family.

The protein resides in the mitochondrion. Functionally, probable phospholipase that hydrolyzes phosphatidic acid. This chain is Probable phospholipase C20G8.02, mitochondrial, found in Schizosaccharomyces pombe (strain 972 / ATCC 24843) (Fission yeast).